Reading from the N-terminus, the 429-residue chain is Multifunctional CCA protein (429 aa).

ATP-binding residues include glycine 27 and arginine 30. Glycine 27 and arginine 30 together coordinate CTP. 2 residues coordinate Mg(2+): aspartate 40 and aspartate 42. Residues arginine 110, arginine 162, and arginine 165 each contribute to the ATP site. Residues arginine 110, arginine 162, and arginine 165 each coordinate CTP. The HD domain maps to 251–352 (TGVHTMMVVD…VRLLERCDAL (102 aa)).

Belongs to the tRNA nucleotidyltransferase/poly(A) polymerase family. Bacterial CCA-adding enzyme type 1 subfamily. Monomer. Can also form homodimers and oligomers. Mg(2+) serves as cofactor. Requires Ni(2+) as cofactor.

The catalysed reaction is a tRNA precursor + 2 CTP + ATP = a tRNA with a 3' CCA end + 3 diphosphate. It carries out the reaction a tRNA with a 3' CCA end + 2 CTP + ATP = a tRNA with a 3' CCACCA end + 3 diphosphate. Its function is as follows. Catalyzes the addition and repair of the essential 3'-terminal CCA sequence in tRNAs without using a nucleic acid template. Adds these three nucleotides in the order of C, C, and A to the tRNA nucleotide-73, using CTP and ATP as substrates and producing inorganic pyrophosphate. tRNA 3'-terminal CCA addition is required both for tRNA processing and repair. Also involved in tRNA surveillance by mediating tandem CCA addition to generate a CCACCA at the 3' terminus of unstable tRNAs. While stable tRNAs receive only 3'-terminal CCA, unstable tRNAs are marked with CCACCA and rapidly degraded. The protein is Multifunctional CCA protein of Ralstonia nicotianae (strain ATCC BAA-1114 / GMI1000) (Ralstonia solanacearum).